Consider the following 251-residue polypeptide: Protection of telomeres homolog 2 (251 aa).

The segment at 221 to 251 is disordered; sequence ELDNWPEGPPKTFAEAIARANNSRRPRDPPQ.

It belongs to the telombin family.

The protein localises to the nucleus. The protein resides in the chromosome. It is found in the telomere. Functionally, telomeric DNA-binding protein, which binds to two or more single-stranded G-rich repeat sequences (G-strand), with high specificity to the 5'-TTAGGC-3' sequence. In addition, repeat sequence binding requires a 3' single-stranded telomeric overhang. Acts redundantly with pot-1 to negatively regulate telomerase-mediated telomere extension. Also regulates telomere length by the telomerase-independent telomere maintenance pathway called ALT (alternative lengthening of telomeres). Does not appear to have a role in anchoring telomeres to the nuclear envelope. The polypeptide is Protection of telomeres homolog 2 (Caenorhabditis elegans).